Consider the following 163-residue polypeptide: D-aminoacyl-tRNA deacylase (163 aa).

The Gly-cisPro motif, important for rejection of L-amino acids signature appears at 141–142 (GP).

It belongs to the DTD family. As to quaternary structure, homodimer.

It is found in the cytoplasm. The enzyme catalyses glycyl-tRNA(Ala) + H2O = tRNA(Ala) + glycine + H(+). The catalysed reaction is a D-aminoacyl-tRNA + H2O = a tRNA + a D-alpha-amino acid + H(+). Its function is as follows. An aminoacyl-tRNA editing enzyme that deacylates mischarged D-aminoacyl-tRNAs. Also deacylates mischarged glycyl-tRNA(Ala), protecting cells against glycine mischarging by AlaRS. Acts via tRNA-based rather than protein-based catalysis; rejects L-amino acids rather than detecting D-amino acids in the active site. By recycling D-aminoacyl-tRNA to D-amino acids and free tRNA molecules, this enzyme counteracts the toxicity associated with the formation of D-aminoacyl-tRNA entities in vivo and helps enforce protein L-homochirality. The polypeptide is D-aminoacyl-tRNA deacylase (Neisseria meningitidis serogroup A / serotype 4A (strain DSM 15465 / Z2491)).